The sequence spans 212 residues: Cell division protein YtfB (212 aa).

A helical transmembrane segment spans residues 34 to 50 (GIIIAAIVLVVGFLLPS). Residues 88 to 127 (NDPDQVAPVAPEPIQEGQPEEQPQTTQTQPFQPDSGIDNQ) form a disordered region. Positions 99-120 (EPIQEGQPEEQPQTTQTQPFQP) are enriched in low complexity. Residues 117–212 (PFQPDSGIDN…QPDGSFIRAR (96 aa)) are oapA.

Belongs to the OapA family.

It is found in the cell inner membrane. Functionally, cell division protein whose function is related to the generation of a transient cell wall structure. Function is linked to the late stages of cell division. The sequence is that of Cell division protein YtfB (ytfB) from Escherichia coli (strain K12).